The following is a 101-amino-acid chain: NADH-quinone oxidoreductase subunit K (101 aa).

Transmembrane regions (helical) follow at residues 4 to 24 (LGHYLTLGAILFALSVIGIFL), 30 to 50 (IVLLMCIELMLLAVNLNFVAF), and 61 to 81 (VFVFFILTVAAAESAIGLAIL).

The protein belongs to the complex I subunit 4L family. NDH-1 is composed of 14 different subunits. Subunits NuoA, H, J, K, L, M, N constitute the membrane sector of the complex.

The protein resides in the cell inner membrane. The enzyme catalyses a quinone + NADH + 5 H(+)(in) = a quinol + NAD(+) + 4 H(+)(out). Functionally, NDH-1 shuttles electrons from NADH, via FMN and iron-sulfur (Fe-S) centers, to quinones in the respiratory chain. The immediate electron acceptor for the enzyme in this species is believed to be ubiquinone. Couples the redox reaction to proton translocation (for every two electrons transferred, four hydrogen ions are translocated across the cytoplasmic membrane), and thus conserves the redox energy in a proton gradient. In Leptothrix cholodnii (strain ATCC 51168 / LMG 8142 / SP-6) (Leptothrix discophora (strain SP-6)), this protein is NADH-quinone oxidoreductase subunit K.